A 314-amino-acid chain; its full sequence is Olfactory receptor 5G29 (314 aa).

The Extracellular portion of the chain corresponds to 1–25 (MEEKNQTIVMEFFFLGLTDHLYQKI). An N-linked (GlcNAc...) asparagine glycan is attached at asparagine 5. The chain crosses the membrane as a helical span at residues 26-46 (ALFITILFVYLVTLGGNLGMI). Residues 47–54 (TLIWADPR) lie on the Cytoplasmic side of the membrane. The helical transmembrane segment at 55–75 (LHTPMYFFLSHLSFVDMCSSS) threads the bilayer. The Extracellular segment spans residues 76-99 (SIAPKMLCDIFAEEKRISFMGCAA). A disulfide bridge connects residues cysteine 97 and cysteine 189. A helical membrane pass occupies residues 100–120 (QMWFFGFFVGTECFLLASMAY). Residues 121–133 (DRYTAICKPLLYT) are Cytoplasmic-facing. The chain crosses the membrane as a helical span at residues 134 to 154 (LLMSQRVCVHLVVGPYVFAII). Over 155–196 (NITTHTTLAFCLPFCGSNTINHFFCDVSPLLSLACADSWVNK) the chain is Extracellular. Residues 197 to 217 (VVLFVLSGAIGVFSGLIIIVS) traverse the membrane as a helical segment. The Cytoplasmic portion of the chain corresponds to 218–237 (YVSILMTIFKIQTADGKQKA). A helical membrane pass occupies residues 238–258 (FSTCSSHLSAVSILYGTLFFI). The Extracellular portion of the chain corresponds to 259 to 271 (YVRPSASFSLNIN). The helical transmembrane segment at 272 to 292 (KMISLFYTVVIPMLNPLIYSL) threads the bilayer. The Cytoplasmic segment spans residues 293-312 (RNKEVKGAFRRKVQKKHFPA).

This sequence belongs to the G-protein coupled receptor 1 family.

The protein resides in the cell membrane. Potential odorant receptor. This Mus musculus (Mouse) protein is Olfactory receptor 5G29.